A 416-amino-acid polypeptide reads, in one-letter code: Caspase-9 (416 aa).

The 92-residue stretch at 1 to 92 (MDEADRRLLR…DMLASFLRTN (92 aa)) folds into the CARD domain. Residue T125 is modified to Phosphothreonine; by MAPK1. Y153 is subject to Phosphotyrosine; by ABL1. Catalysis depends on residues H237 and C287. The tract at residues 294–320 (HGFEVASTSPEDESPGSNPEPDATPFQ) is disordered. A phosphoserine mark is found at S302, S307, and S310. Positions 316-330 (ATPFQEGLRTFDQLD) are excised as a propeptide. At R355 the chain carries (Microbial infection) ADP-riboxanated arginine.

This sequence belongs to the peptidase C14A family. As to quaternary structure, heterotetramer that consists of two anti-parallel arranged heterodimers, each one formed by a 35 kDa (p35) and a 10 kDa (p10) subunit. Caspase-9 and APAF1 bind to each other via their respective NH2-terminal CED-3 homologous domains in the presence of cytochrome C and ATP. Interacts (inactive form) with EFHD2. Interacts with HAX1. Interacts with BIRC2/c-IAP1, XIAP/BIRC4, BIRC5/survivin, BIRC6/bruce and BIRC7/livin. Interacts with ABL1 (via SH3 domain); the interaction is direct and increases in the response of cells to genotoxic stress and ABL1/c-Abl activation. Interacts with BCL2L10. Interacts with NleF from pathogenic E.coli. Post-translationally, cleavages at Asp-315 by granzyme B and at Asp-330 by caspase-3 generate the two active subunits. Caspase-8 and -10 can also be involved in these processing events. Phosphorylated at Thr-125 by MAPK1/ERK2. Phosphorylation at Thr-125 is sufficient to block caspase-9 processing and subsequent caspase-3 activation. Phosphorylation on Tyr-153 by ABL1/c-Abl; occurs in the response of cells to DNA damage. In terms of processing, (Microbial infection) ADP-riboxanation by C.violaceum CopC blocks CASP9 processing, preventing CASP9 activation and ability to mediate intrinsic apoptosis. Post-translationally, ubiquitinated by BIRC6; this activity is inhibited by DIABLO/SMAC. As to expression, ubiquitous, with highest expression in the heart, moderate expression in liver, skeletal muscle, and pancreas. Low levels in all other tissues. Within the heart, specifically expressed in myocytes.

It catalyses the reaction Strict requirement for an Asp residue at position P1 and with a marked preference for His at position P2. It has a preferred cleavage sequence of Leu-Gly-His-Asp-|-Xaa.. Inhibited by the effector protein NleF that is produced by pathogenic E.coli; this inhibits apoptosis. Inhibited by BIRC6; following inhibition of BIRC6-caspase binding by DIABLO/SMAC, BIRC6 is subjected to caspase cleavage, leading to an increase in active caspases. In terms of biological role, involved in the activation cascade of caspases responsible for apoptosis execution. Binding of caspase-9 to Apaf-1 leads to activation of the protease which then cleaves and activates effector caspases caspase-3 (CASP3) or caspase-7 (CASP7). Promotes DNA damage-induced apoptosis in a ABL1/c-Abl-dependent manner. Proteolytically cleaves poly(ADP-ribose) polymerase (PARP). Cleaves BIRC6 following inhibition of BIRC6-caspase binding by DIABLO/SMAC. Lacks activity is an dominant-negative inhibitor of caspase-9. This is Caspase-9 (CASP9) from Homo sapiens (Human).